The chain runs to 1043 residues: Glutamate receptor ionotropic, NMDA 3B (1043 aa).

The N-terminal stretch at 1–22 (MEFVRALWLGLALALGPGSAGG) is a signal peptide. Topologically, residues 23 to 574 (HPQPCGVLAR…PIGAFMWPLH (552 aa)) are extracellular. Residues asparagine 69, asparagine 344, asparagine 451, and asparagine 465 are each glycosylated (N-linked (GlcNAc...) asparagine). 2 disulfide bridges follow: cysteine 439-cysteine 475 and cysteine 445-cysteine 476. The glycine site is built by serine 531, serine 533, and arginine 538. D-serine contacts are provided by serine 533 and arginine 538. Residues 575 to 594 (WSTWLGVFAALHLTALFLTV) form a helical membrane-spanning segment. Residues 595 to 615 (YEWRSPYGLTPRGRNRSTVFS) lie on the Cytoplasmic side of the membrane. The segment at residues 616-627 (YSSALNLCYAIL) is an intramembrane region (discontinuously helical). Residues 628-641 (FRRTVSSKTPKCPT) lie on the Cytoplasmic side of the membrane. A helical transmembrane segment spans residues 642-661 (GRLLMNLWAIFCLLVLSSYT). The Extracellular portion of the chain corresponds to 662–832 (ANLAAVMVGD…TLQMSIYHFA (171 aa)). Residue serine 701 participates in glycine binding. D-serine contacts are provided by serine 701, alanine 702, and aspartate 745. A glycine-binding site is contributed by aspartate 745. The N-linked (GlcNAc...) asparagine glycan is linked to asparagine 786. Residues 833–848 (GLFVLLCLGLGSALLS) traverse the membrane as a helical segment. At 849 to 1043 (SLGEHAFFRL…PHSGRPGSQE (195 aa)) the chain is on the cytoplasmic side. 2 disordered regions span residues 882 to 924 (ALNT…WKRA) and 1012 to 1043 (GDSA…GSQE). Residues 979 to 1012 (QPGELQELERRIEVARERLRQALVRRGQLLAQLG) are involved in the trafficking and surface expression of NMDARs. Over residues 1024 to 1035 (QARAAPAEAPPH) the composition is skewed to low complexity.

The protein belongs to the glutamate-gated ion channel (TC 1.A.10.1) family. NR3B/GRIN3B subfamily. Forms heterotetrameric channels that contain at least two GluN1 subunits and at least a combination of one GluN2 and one GluN3 subunits (in vitro). Forms heterotetrameric channels composed of two GluN1/zeta subunits (GRIN1), and two identical GluN3 subunits (GRIN3A or GRIN3B) (in vitro). Does not form functional homomeric channels.

It is found in the cell membrane. The protein localises to the postsynaptic cell membrane. The enzyme catalyses Ca(2+)(in) = Ca(2+)(out). It catalyses the reaction Na(+)(in) = Na(+)(out). Its function is as follows. Component of a non-conventional N-methyl-D-aspartate (NMDA) receptors (NMDARs) that function as heterotetrameric, ligand-gated cation channels with low calcium permeability and low voltage-dependent block by Mg(2+). Forms glutamatergic receptor complexes with GluN1 and GluN2 subunits which are activated by glycine binding to the GluN1 and GluN3 subunits and L-glutamate binding to GluN2 subunits. Forms excitatory glycinergic receptor complexes with GluN1 alone which are activated by glycine binding to the GluN1 and GluN3 subunits. GluN3B subunit also binds D-serine and, in the absence of glycine, activates glycinergic receptor complexes, but with lower efficacy than glycine. Each GluN3 subunit confers differential attributes to channel properties, including activation, deactivation and desensitization kinetics, pH sensitivity, Ca2(+) permeability, and binding to allosteric modulators. The chain is Glutamate receptor ionotropic, NMDA 3B from Homo sapiens (Human).